A 590-amino-acid polypeptide reads, in one-letter code: Protein NRT1/ PTR FAMILY 6.3 (590 aa).

2 helical membrane passes run 46–66 and 77–97; these read LTTL…MHLG and FLGT…TFLG. Thr101 is modified (phosphothreonine; by CIPK23). A run of 10 helical transmembrane segments spans residues 102–122, 143–163, 193–213, 219–239, 342–362, 374–394, 423–443, 460–480, 501–521, and 542–562; these read IAIF…STII, GIQL…TGGV, FFFC…YVQD, WGYG…LAGT, MLPI…LTTL, IGSF…GLLL, IGLG…VELK, LGFY…ALIY, GLLL…VTIV, and YNFY…FLVF. Residues His356 and Thr360 each contribute to the substrate site.

This sequence belongs to the major facilitator superfamily. Proton-dependent oligopeptide transporter (POT/PTR) (TC 2.A.17) family. In terms of assembly, monomer and homodimer. The dimer has the 2 monomers in the same orientation. Interacts with CIPK23. Post-translationally, acts as a high-affinity nitrate transporter when phosphorylated and as a low-affinity transporter when dephosphorylated. Forms homodimer when unphosphorylated and monomer when phosphorylated. Low nitrogen concentration in the medium stimulates phosphorylation. Phosphorylation also regulates the nitrate signaling. In terms of tissue distribution, expressed in the stele in lateral root primordia before emergence and in the tip of primary and emerged lateral roots. Detected in emerging and immature leaves, guard cells, flower buds, style, stigma, anthers and pollen grains. Not detected in the shoot apical meristem.

The protein localises to the membrane. In terms of biological role, dual affinity nitrate transporter. Involved in proton-dependent nitrate uptake and in the regulation of the nitrate transporter NRT2.1. Also acts as a nitrate sensor that trigger a specific signaling pathway stimulating lateral root growth and seed germination. The uptake activity is not required for sensor function. Displays an auxin transport facilitation inhibited by high nitrate concentration. Required to prevent auxin accumulation in preemerged lateral root primordia and young lateral roots when external nitrate concentration is low or null. May be involved in the basipetal transport of auxin out of the lateral root tips. Acts as a bidirectional transporter involved in root-to-shoot nitrate translocation. Recognizes specifically nitrate and chlorate, but not nitrite, alanine, sulfate, phosphate or the di-peptide Ala-Ala. The polypeptide is Protein NRT1/ PTR FAMILY 6.3 (NPF6.3) (Arabidopsis thaliana (Mouse-ear cress)).